The chain runs to 318 residues: uncharacterized protein (318 aa).

This sequence to A.aeolicus AA07 and AA11.

This is an uncharacterized protein from Aquifex aeolicus (strain VF5).